The primary structure comprises 297 residues: MTRYRGRFAPSPTGPLHFGSLVGALASWLDARAWGGAWLVRIEDIDGPRTVPGAAEDMLATLRGFGFIADEPPVWQSARVAHYEAALARLTAAGLVYPCGCSRKEIADSLRAAHERHTTLAYPGTCRTGLHGKPARAWRLRVPDGAAAVVAFDDRWQRAQTQNLATEVGDFVLKRADGQWAYQLAVVVDDGDANITHVVRGADLLDSTARQIYLQRCLGLPTPRYLHVPVVLDANGEKLSKQTGAAALDPAAPLPALAAAARHLGLALDGAACASLDAFQAAAIAAWDARFGPNARG.

L-glutamate-binding positions include 7–11 (RFAPS) and E43. A 'HIGH' region motif is present at residues 10–20 (PSPTGPLHFGS). Positions 99, 101, 122, and 126 each coordinate Zn(2+). Positions 182 and 200 each coordinate L-glutamate. Residues 238–242 (KLSKQ) carry the 'KMSKS' region motif. ATP is bound at residue K241.

The protein belongs to the class-I aminoacyl-tRNA synthetase family. GluQ subfamily. It depends on Zn(2+) as a cofactor.

In terms of biological role, catalyzes the tRNA-independent activation of glutamate in presence of ATP and the subsequent transfer of glutamate onto a tRNA(Asp). Glutamate is transferred on the 2-amino-5-(4,5-dihydroxy-2-cyclopenten-1-yl) moiety of the queuosine in the wobble position of the QUC anticodon. This is Glutamyl-Q tRNA(Asp) synthetase from Burkholderia pseudomallei (strain K96243).